The primary structure comprises 360 residues: Phosphoserine aminotransferase (360 aa).

Arg-41 contacts L-glutamate. 4 residues coordinate pyridoxal 5'-phosphate: Trp-101, Thr-152, Asp-172, and Gln-195. Lys-196 is subject to N6-(pyridoxal phosphate)lysine. 237-238 (NT) lines the pyridoxal 5'-phosphate pocket.

This sequence belongs to the class-V pyridoxal-phosphate-dependent aminotransferase family. SerC subfamily. Homodimer. The cofactor is pyridoxal 5'-phosphate.

It localises to the cytoplasm. It catalyses the reaction O-phospho-L-serine + 2-oxoglutarate = 3-phosphooxypyruvate + L-glutamate. The enzyme catalyses 4-(phosphooxy)-L-threonine + 2-oxoglutarate = (R)-3-hydroxy-2-oxo-4-phosphooxybutanoate + L-glutamate. It functions in the pathway amino-acid biosynthesis; L-serine biosynthesis; L-serine from 3-phospho-D-glycerate: step 2/3. Its pathway is cofactor biosynthesis; pyridoxine 5'-phosphate biosynthesis; pyridoxine 5'-phosphate from D-erythrose 4-phosphate: step 3/5. In terms of biological role, catalyzes the reversible conversion of 3-phosphohydroxypyruvate to phosphoserine and of 3-hydroxy-2-oxo-4-phosphonooxybutanoate to phosphohydroxythreonine. The chain is Phosphoserine aminotransferase from Burkholderia lata (strain ATCC 17760 / DSM 23089 / LMG 22485 / NCIMB 9086 / R18194 / 383).